Here is a 985-residue protein sequence, read N- to C-terminus: Alpha-glucosidase (985 aa).

Positions 1 to 25 are cleaved as a signal peptide; the sequence is MAGLKSFLASSWLLPVACGASQSIV. N-linked (GlcNAc...) asparagine glycans are attached at residues asparagine 126, asparagine 145, asparagine 220, asparagine 255, asparagine 349, and asparagine 424. The active-site Nucleophile is the aspartate 492. Residue glutamate 495 is part of the active site. Asparagine 508, asparagine 536, asparagine 539, asparagine 602, and asparagine 624 each carry an N-linked (GlcNAc...) asparagine glycan. The Proton donor role is filled by aspartate 660. N-linked (GlcNAc...) asparagine glycans are attached at residues asparagine 661, asparagine 835, asparagine 881, asparagine 929, and asparagine 957.

It belongs to the glycosyl hydrolase 31 family.

The catalysed reaction is Hydrolysis of terminal, non-reducing (1-&gt;4)-linked alpha-D-glucose residues with release of alpha-D-glucose.. Functionally, hydrolyzes malto-oligosaccharides, but has a low activity toward soluble starch. The sequence is that of Alpha-glucosidase (agdA) from Aspergillus oryzae (strain ATCC 42149 / RIB 40) (Yellow koji mold).